The chain runs to 178 residues: Putative pre-16S rRNA nuclease (178 aa).

2 stretches are compositionally biased toward basic and acidic residues: residues 1 to 18 (MDHAEQGPDRPGVDDPGR) and 50 to 60 (PRSKDRGPDAP). Disordered regions lie at residues 1 to 23 (MDHAEQGPDRPGVDDPGRGRRIG) and 36 to 60 (SDPDGILATPVETVPRSKDRGPDAP).

The protein belongs to the YqgF nuclease family.

The protein resides in the cytoplasm. Its function is as follows. Could be a nuclease involved in processing of the 5'-end of pre-16S rRNA. This Rhodococcus opacus (strain B4) protein is Putative pre-16S rRNA nuclease.